We begin with the raw amino-acid sequence, 446 residues long: MEKLKILNLNFSFQRAAHYHINGGMLLMGVVLLAMFLANSPWGDIYASFWNYEVHLQIGEFNFFSHNGHHMTLMTFINDALMAVFFFSVGLEIKREILVGELSSFRQALLPIVAACGGMLVPVLIYYFMTAGTPAQSGLAIPMATDIAFSLGVLSLFGKRVPLSLKVFLTAFAVVDDIGGILVIALFYTSHLSVNYLIASAGILLILCGGNFFRVHNRWFYIFWGVIMWYLFLQSGIHATIAGVVAAFTVPATPHYKIGKYINRIRENIAVFPASDKESVVLSKMQINVLKSIESSSDRVISPLQSLEDSLHGMVNYIILPLFAFANAGVSLTADHGGLEVGMATWAVLAGLLAGKFAGIYFFTWLVIKMGFAGLLKGMTWVNLTGICLLGGIGFTVSLFIANLSFGDSPVLLTQAKMGVILGTVLAGVLAYLVLQFALPKQPAQE.

11 helical membrane passes run 23–43, 73–93, 109–129, 138–158, 167–187, 193–213, 219–239, 314–334, 348–368, 381–401, and 419–439; these read GGMLLMGVVLLAMFLANSPWG, LMTFINDALMAVFFFSVGLEI, LLPIVAACGGMLVPVLIYYFM, GLAIPMATDIAFSLGVLSLFG, VFLTAFAVVDDIGGILVIALF, SVNYLIASAGILLILCGGNFF, WFYIFWGVIMWYLFLQSGIHA, MVNYIILPLFAFANAGVSLTA, VLAGLLAGKFAGIYFFTWLVI, WVNLTGICLLGGIGFTVSLFI, and GVILGTVLAGVLAYLVLQFAL.

Belongs to the NhaA Na(+)/H(+) (TC 2.A.33) antiporter family.

It is found in the cell inner membrane. The catalysed reaction is Na(+)(in) + 2 H(+)(out) = Na(+)(out) + 2 H(+)(in). Functionally, na(+)/H(+) antiporter that extrudes sodium in exchange for external protons. The polypeptide is Na(+)/H(+) antiporter NhaA (Phocaeicola vulgatus (strain ATCC 8482 / DSM 1447 / JCM 5826 / CCUG 4940 / NBRC 14291 / NCTC 11154) (Bacteroides vulgatus)).